A 240-amino-acid chain; its full sequence is 2,3,4,5-tetrahydropyridine-2,6-dicarboxylate N-acetyltransferase (240 aa).

Belongs to the transferase hexapeptide repeat family. DapH subfamily.

It carries out the reaction (S)-2,3,4,5-tetrahydrodipicolinate + acetyl-CoA + H2O = L-2-acetamido-6-oxoheptanedioate + CoA. It functions in the pathway amino-acid biosynthesis; L-lysine biosynthesis via DAP pathway; LL-2,6-diaminopimelate from (S)-tetrahydrodipicolinate (acetylase route): step 1/3. Catalyzes the transfer of an acetyl group from acetyl-CoA to tetrahydrodipicolinate. The chain is 2,3,4,5-tetrahydropyridine-2,6-dicarboxylate N-acetyltransferase from Bacillus mycoides (strain KBAB4) (Bacillus weihenstephanensis).